The sequence spans 92 residues: Progonadoliberin-1 (92 aa).

An N-terminal signal peptide occupies residues 1–23; the sequence is MELVPKFLAGLILLTLCVGGCYA. Gln24 is subject to Pyrrolidone carboxylic acid. At Gly33 the chain carries Glycine amide.

It belongs to the GnRH family.

The protein localises to the secreted. Functionally, stimulates the secretion of gonadotropins; it stimulates the secretion of both luteinizing and follicle-stimulating hormones. The sequence is that of Progonadoliberin-1 (GNRH1) from Tupaia belangeri (Common tree shrew).